Consider the following 66-residue polypeptide: Large ribosomal subunit protein bL33c (66 aa).

As to quaternary structure, component of the chloroplast large ribosomal subunit (LSU). Mature 70S chloroplast ribosomes of higher plants consist of a small (30S) and a large (50S) subunit. The 30S small subunit contains 1 molecule of ribosomal RNA (16S rRNA) and 24 different proteins. The 50S large subunit contains 3 rRNA molecules (23S, 5S and 4.5S rRNA) and 33 different proteins.

It is found in the plastid. Its subcellular location is the chloroplast. Functionally, component of the chloroplast ribosome (chloro-ribosome), a dedicated translation machinery responsible for the synthesis of chloroplast genome-encoded proteins, including proteins of the transcription and translation machinery and components of the photosynthetic apparatus. The sequence is that of Large ribosomal subunit protein bL33c (rpl33) from Spinacia oleracea (Spinach).